Consider the following 635-residue polypeptide: Chaperone protein HtpG (635 aa).

Residues 1 to 343 are a; substrate-binding; it reads MTAEATVETR…SNDLSLNVSR (343 aa). Residues 344–560 are b; the sequence is EILQQDPNID…EHDMGAQMRR (217 aa). The segment at 561 to 635 is c; that stretch reads LLEAAGQAVP…LNKLLLELSN (75 aa).

The protein belongs to the heat shock protein 90 family. Homodimer.

It localises to the cytoplasm. Functionally, molecular chaperone. Has ATPase activity. The protein is Chaperone protein HtpG of Saccharophagus degradans (strain 2-40 / ATCC 43961 / DSM 17024).